The following is a 245-amino-acid chain: tRNA pseudouridine synthase A (245 aa).

D52 serves as the catalytic Nucleophile. Y111 is a substrate binding site.

It belongs to the tRNA pseudouridine synthase TruA family. Homodimer.

The enzyme catalyses uridine(38/39/40) in tRNA = pseudouridine(38/39/40) in tRNA. Formation of pseudouridine at positions 38, 39 and 40 in the anticodon stem and loop of transfer RNAs. The protein is tRNA pseudouridine synthase A of Rickettsia bellii (strain RML369-C).